The sequence spans 401 residues: Argininosuccinate synthase (401 aa).

ATP is bound at residue 9-17; it reads AYSGGLDTS. An L-citrulline-binding site is contributed by Tyr86. ATP is bound at residue Gly116. L-aspartate contacts are provided by Thr118, Asn122, and Asp123. Asn122 is an L-citrulline binding site. 5 residues coordinate L-citrulline: Arg126, Ser174, Ser183, Glu259, and Tyr271.

Belongs to the argininosuccinate synthase family. Type 1 subfamily. Homotetramer.

It is found in the cytoplasm. The catalysed reaction is L-citrulline + L-aspartate + ATP = 2-(N(omega)-L-arginino)succinate + AMP + diphosphate + H(+). The protein operates within amino-acid biosynthesis; L-arginine biosynthesis; L-arginine from L-ornithine and carbamoyl phosphate: step 2/3. The protein is Argininosuccinate synthase of Bacillus thuringiensis (strain Al Hakam).